Reading from the N-terminus, the 530-residue chain is Cytochrome P450 monooxygenase apf7 (530 aa).

The chain crosses the membrane as a helical span at residues 6–26 (VSPVSIWVFVIYAVTIIIAIY). Asn-85 carries N-linked (GlcNAc...) asparagine glycosylation. Heme is bound at residue Cys-464.

It belongs to the cytochrome P450 family. Heme is required as a cofactor.

The protein resides in the membrane. Its pathway is secondary metabolite biosynthesis. In terms of biological role, cytochrome P450 monooxygenase; part of the gene cluster that mediates the biosynthesis of the cyclic tetrapeptide apicidin F (APF). The non-ribosomal peptide synthetase apf1 incorporates four different amino acids to produce apicidin F: L-phenylalanine, D-pipecolic acid (D-pip), N-methoxy-L-tryptophan and L-2-aminooctanedioic acid. L-Phenylalanine is the only proteinogenic amino acid directly used by apf1. The 3 other apf1 substrates are non-proteinogenic and have to be modified by other enzymes of the cluster. Lysine is converted to delta-1-pyrroline-5-carboxylate (P5C) which is reduced to L-pipecolic acid (L-pip) by apf3. L-pip is epimerized to D-pip, probably by apf1 activity, prior to incorporation. L-Tryptophan is N-oxidyzed by one of the cytochrome P450 monooxygenases (apf7 or apf8), and further methylated at the hydroxy group by the O-methyltransferase apf6 to yield N-methoxy-L-tryptophan. The synthesis of the fourth apf1 substrate is more complex. The fatty acid synthase apf5 is involved in the synthesis of the octanoic acid backbone of L-2-aminooctanedioic acid by fixing one acetyl-CoA unit and three malonyl-CoA units. Then one of the cytochrome P450 monooxygenases (apf7 or apf8) may oxidize this backbone to 2-oxooctanoic acid. The aminotransferase apf4 is predicted to catalyze the exchange of the keto group with an amino group. The next step would be the oxidation of 2-aminooctanoic acid by one of the cytochrome P450 monooxygenases (apf7 or apf8). The last step is the oxidation of 2-amino-8-hydroxyoctanoic acid to 2-aminooctanedioic acid is catalyzed by the FAD-dependent monooxygenase apf9. The chain is Cytochrome P450 monooxygenase apf7 from Gibberella fujikuroi (strain CBS 195.34 / IMI 58289 / NRRL A-6831) (Bakanae and foot rot disease fungus).